Here is a 426-residue protein sequence, read N- to C-terminus: Serine--tRNA ligase (426 aa).

233-235 (TAE) contacts L-serine. 264-266 (RAE) contacts ATP. E287 is an L-serine binding site. An ATP-binding site is contributed by 351 to 354 (EISS). Position 387 (S387) interacts with L-serine.

It belongs to the class-II aminoacyl-tRNA synthetase family. Type-1 seryl-tRNA synthetase subfamily. Homodimer. The tRNA molecule binds across the dimer.

Its subcellular location is the cytoplasm. It catalyses the reaction tRNA(Ser) + L-serine + ATP = L-seryl-tRNA(Ser) + AMP + diphosphate + H(+). The catalysed reaction is tRNA(Sec) + L-serine + ATP = L-seryl-tRNA(Sec) + AMP + diphosphate + H(+). Its pathway is aminoacyl-tRNA biosynthesis; selenocysteinyl-tRNA(Sec) biosynthesis; L-seryl-tRNA(Sec) from L-serine and tRNA(Sec): step 1/1. In terms of biological role, catalyzes the attachment of serine to tRNA(Ser). Is also able to aminoacylate tRNA(Sec) with serine, to form the misacylated tRNA L-seryl-tRNA(Sec), which will be further converted into selenocysteinyl-tRNA(Sec). In Clostridium kluyveri (strain NBRC 12016), this protein is Serine--tRNA ligase.